Here is a 261-residue protein sequence, read N- to C-terminus: Ribosomal RNA small subunit methyltransferase G (261 aa).

Residues Gly94, Leu99, 117-119 (EST), 145-146 (VE), and Arg164 each bind S-adenosyl-L-methionine.

The protein belongs to the methyltransferase superfamily. RNA methyltransferase RsmG family.

The protein localises to the cytoplasm. Its function is as follows. Specifically methylates the N7 position of a guanine in 16S rRNA. In Rubrobacter xylanophilus (strain DSM 9941 / JCM 11954 / NBRC 16129 / PRD-1), this protein is Ribosomal RNA small subunit methyltransferase G.